The primary structure comprises 208 residues: uncharacterized protein (208 aa).

Positions methionine 1–alanine 16 are cleaved as a signal peptide. Asparagine 79 carries an N-linked (GlcNAc...) asparagine glycan.

This is an uncharacterized protein from Caenorhabditis elegans.